The following is a 287-amino-acid chain: 3-methyl-2-oxobutanoate hydroxymethyltransferase (287 aa).

Positions 1–19 are enriched in polar residues; that stretch reads MSTLPKTLTLDTSTSRANP. Residues 1-24 are disordered; sequence MSTLPKTLTLDTSTSRANPTPQPM. Positions 66 and 105 each coordinate Mg(2+). Residues 66–67, D105, and K135 each bind 3-methyl-2-oxobutanoate; that span reads DS. E137 is a binding site for Mg(2+). Residue E204 is the Proton acceptor of the active site.

This sequence belongs to the PanB family. Homodecamer; pentamer of dimers. It depends on Mg(2+) as a cofactor.

It is found in the cytoplasm. It catalyses the reaction 3-methyl-2-oxobutanoate + (6R)-5,10-methylene-5,6,7,8-tetrahydrofolate + H2O = 2-dehydropantoate + (6S)-5,6,7,8-tetrahydrofolate. It functions in the pathway cofactor biosynthesis; (R)-pantothenate biosynthesis; (R)-pantoate from 3-methyl-2-oxobutanoate: step 1/2. Functionally, catalyzes the reversible reaction in which hydroxymethyl group from 5,10-methylenetetrahydrofolate is transferred onto alpha-ketoisovalerate to form ketopantoate. This Sphingopyxis alaskensis (strain DSM 13593 / LMG 18877 / RB2256) (Sphingomonas alaskensis) protein is 3-methyl-2-oxobutanoate hydroxymethyltransferase.